The chain runs to 1373 residues: Ribonuclease 3 (1373 aa).

3 disordered regions span residues 1-99 (MQGN…PVRP), 119-406 (MPPP…EEEL), and 447-496 (FEEE…SSSS). A compositionally biased stretch (low complexity) spans 47 to 69 (PAQYQYEPPSAPSSSYSNSQAPS). 3 stretches are compositionally biased toward pro residues: residues 70–99 (FMPP…PVRP), 119–133 (MPPP…PASG), and 144–159 (MVPP…PPVM). 2 stretches are compositionally biased toward low complexity: residues 160-169 (PQQVNYQYPP) and 185-200 (NNSS…SSTP). 3 stretches are compositionally biased toward basic and acidic residues: residues 214 to 271 (QNER…DRGR), 278 to 288 (RSYERSRERDR), and 297 to 312 (RRSP…EYKR). Phosphoserine is present on residues Ser354 and Ser372. Composition is skewed to basic and acidic residues over residues 363–398 (RWEE…PPEK) and 447–459 (FEEE…EKAK). The segment at 389–1364 (KEAEEVPPEK…RWEREHQERE (976 aa)) is necessary for interaction with DGCR8 and pri-miRNA processing activity. Acidic residues predominate over residues 474–490 (EDLESSSESECETDDDS). Zn(2+) contacts are provided by Cys535, Cys537, His548, Cys560, His608, Cys675, and His679. 2 consecutive RNase III domains span residues 875 to 1055 (LMHL…LEGS) and 1106 to 1232 (LTEF…IDKD). Residue Glu968 coordinates Mg(2+). His1025 lines the Zn(2+) pocket. Residues Asn1041, Glu1044, Glu1146, Asp1218, and Glu1221 each contribute to the Mg(2+) site. One can recognise a DRBM domain in the interval 1259 to 1333 (DPKSQLQQCC…AMDALEKYNF (75 aa)).

The protein belongs to the ribonuclease III family. As to quaternary structure, component of the microprocessor complex, or pri-miRNA processing protein complex, which is composed of DROSHA and DGCR8. The microprocessor complex is a heterotrimer; each of the two DROSHA RNase III domains binds one DGCR8 (via C-terminal region). Interacts with SP1 and SNIP1. Interacts with SRRT/ARS2. Interacts with CPSF3 and ISY1; this interaction is in an RNA dependent manner. Interacts with PUS10; interaction promotes pri-miRNAs processing. Requires Mg(2+) as cofactor. Mn(2+) serves as cofactor. Post-translationally, degraded by autophagy in response to neuronal activity in motor neurons. In terms of tissue distribution, expressed in motor neurons (at protein level).

It localises to the nucleus. The protein resides in the nucleolus. Its subcellular location is the cytoplasm. The enzyme catalyses Endonucleolytic cleavage to 5'-phosphomonoester.. Its function is as follows. Ribonuclease III double-stranded (ds) RNA-specific endoribonuclease that is involved in the initial step of microRNA (miRNA) biogenesis. Component of the microprocessor complex that is required to process primary miRNA transcripts (pri-miRNAs) to release precursor miRNA (pre-miRNA) in the nucleus. Within the microprocessor complex, DROSHA cleaves the 3' and 5' strands of a stem-loop in pri-miRNAs (processing center 11 bp from the dsRNA-ssRNA junction) to release hairpin-shaped pre-miRNAs that are subsequently cut by the cytoplasmic DICER to generate mature miRNAs. Involved also in pre-rRNA processing. Cleaves double-strand RNA and does not cleave single-strand RNA. Involved in the formation of GW bodies. Plays a role in growth homeostasis in response to autophagy in motor neurons. The polypeptide is Ribonuclease 3 (Drosha) (Mus musculus (Mouse)).